We begin with the raw amino-acid sequence, 431 residues long: MKILDWSQLDGAAQTDALTRPVQTVAARTRDAVAALIADVRTRGDAALREITAHFDGVSLDSFAVSEAEFAAAEAAVPPELRQAMQDAVARIDTFHRAGMSGGYAVETAPGVVCEKIVRPIGRVGLYVPAGSAPLPSTALMLGVPARLAGCREVVLCTPPRKDGSVDPAVLVAARLTGVRRVFKLGGAQAIAAMAYGTESLPSCDKLFGPGNSYVTEAKQQVAQSGAAAIDMPAGPSEVLVIADAGAQPAFVAADLLSQAEHGPDSQVLLLSDSDALIGAVRAQLEVQLAQLSRADIARQALAQSRLIKVQTLDEAFAISNRYAPEHLILALREPRGWLAQVEAAGSVFLGDYTPEALGDYCSGTNHVLPTSGAARAYSGVSVASFQNMVSVQAASKAGIDGIGACALVLARAEGLDAHANAVALRMGVAA.

NAD(+) contacts are provided by Y127, Q189, and N212. Residues S237, Q259, and H262 each coordinate substrate. Zn(2+) contacts are provided by Q259 and H262. Residues E326 and H327 each act as proton acceptor in the active site. Substrate contacts are provided by H327, D360, E414, and H419. D360 lines the Zn(2+) pocket. Position 419 (H419) interacts with Zn(2+).

This sequence belongs to the histidinol dehydrogenase family. Zn(2+) serves as cofactor.

It catalyses the reaction L-histidinol + 2 NAD(+) + H2O = L-histidine + 2 NADH + 3 H(+). It participates in amino-acid biosynthesis; L-histidine biosynthesis; L-histidine from 5-phospho-alpha-D-ribose 1-diphosphate: step 9/9. In terms of biological role, catalyzes the sequential NAD-dependent oxidations of L-histidinol to L-histidinaldehyde and then to L-histidine. This chain is Histidinol dehydrogenase, found in Xanthomonas axonopodis pv. citri (strain 306).